Here is a 361-residue protein sequence, read N- to C-terminus: Peptide chain release factor 1 (361 aa).

The residue at position 238 (glutamine 238) is an N5-methylglutamine.

The protein belongs to the prokaryotic/mitochondrial release factor family. Methylated by PrmC. Methylation increases the termination efficiency of RF1.

Its subcellular location is the cytoplasm. Functionally, peptide chain release factor 1 directs the termination of translation in response to the peptide chain termination codons UAG and UAA. The protein is Peptide chain release factor 1 of Mesomycoplasma hyopneumoniae (strain 7448) (Mycoplasma hyopneumoniae).